Here is a 505-residue protein sequence, read N- to C-terminus: Cytochrome c oxidase subunit 1 (505 aa).

A helical membrane pass occupies residues 14 to 34 (LLYLVFAFFGGLLGTSLSMLI). Ca(2+)-binding residues include Glu37 and Gly42. 6 helical membrane-spanning segments follow: residues 55–75 (VIIT…ALFG), 98–118 (NISF…TLVE), 143–163 (AILS…NMLV), 180–200 (LFVW…PVLA), 229–249 (LFWF…FGIV), and 261–281 (VFGL…GFIV). A Fe(II)-heme a-binding site is contributed by His60. Cu cation-binding residues include His235 and Tyr239. A cross-link (1'-histidyl-3'-tyrosine (His-Tyr)) is located at residues 235-239 (HPEVY). Tyr239 lines the O2 pocket. Positions 284 and 285 each coordinate Cu cation. 2 helical membrane passes run 302–322 (ATMI…ATIY) and 332–352 (MWFA…GVVL). Positions 362 and 363 each coordinate Mg(2+). His370 is a binding site for heme a3. His372 is a Fe(II)-heme a binding site. The next 3 helical transmembrane spans lie at 374–394 (VLSM…GNLI), 408–428 (FWLL…LGLA), and 446–466 (AVSS…ATTF).

The protein belongs to the heme-copper respiratory oxidase family. In terms of assembly, component of the cytochrome c oxidase (complex IV, CIV), a multisubunit enzyme composed of a catalytic core of 3 subunits and several supernumerary subunits. The complex exists as a monomer or a dimer and forms supercomplexes (SCs) in the inner mitochondrial membrane with ubiquinol-cytochrome c oxidoreductase (cytochrome b-c1 complex, complex III, CIII). Heme is required as a cofactor. It depends on Cu cation as a cofactor.

It localises to the mitochondrion inner membrane. It catalyses the reaction 4 Fe(II)-[cytochrome c] + O2 + 8 H(+)(in) = 4 Fe(III)-[cytochrome c] + 2 H2O + 4 H(+)(out). The protein operates within energy metabolism; oxidative phosphorylation. In terms of biological role, component of the cytochrome c oxidase, the last enzyme in the mitochondrial electron transport chain which drives oxidative phosphorylation. The respiratory chain contains 3 multisubunit complexes succinate dehydrogenase (complex II, CII), ubiquinol-cytochrome c oxidoreductase (cytochrome b-c1 complex, complex III, CIII) and cytochrome c oxidase (complex IV, CIV), that cooperate to transfer electrons derived from NADH and succinate to molecular oxygen, creating an electrochemical gradient over the inner membrane that drives transmembrane transport and the ATP synthase. Cytochrome c oxidase is the component of the respiratory chain that catalyzes the reduction of oxygen to water. Electrons originating from reduced cytochrome c in the intermembrane space (IMS) are transferred via the dinuclear copper A center (CU(A)) of subunit 2 and heme A of subunit 1 to the active site in subunit 1, a binuclear center (BNC) formed by heme A3 and copper B (CU(B)). The BNC reduces molecular oxygen to 2 water molecules using 4 electrons from cytochrome c in the IMS and 4 protons from the mitochondrial matrix. In Chlamydomonas reinhardtii (Chlamydomonas smithii), this protein is Cytochrome c oxidase subunit 1 (COX1).